The following is a 258-amino-acid chain: UPF0246 protein VS_0505 (258 aa).

The protein belongs to the UPF0246 family.

This Vibrio atlanticus (strain LGP32) (Vibrio splendidus (strain Mel32)) protein is UPF0246 protein VS_0505.